A 404-amino-acid chain; its full sequence is Cysteine desulfurase IscS (404 aa).

Pyridoxal 5'-phosphate contacts are provided by residues 75 to 76 (AT), Asn-155, Gln-183, and 203 to 205 (SAH). Lys-206 carries the post-translational modification N6-(pyridoxal phosphate)lysine. Residue Thr-243 participates in pyridoxal 5'-phosphate binding. Residue Cys-328 is the Cysteine persulfide intermediate of the active site. [2Fe-2S] cluster is bound at residue Cys-328.

The protein belongs to the class-V pyridoxal-phosphate-dependent aminotransferase family. NifS/IscS subfamily. In terms of assembly, homodimer. Forms a heterotetramer with IscU, interacts with other sulfur acceptors. It depends on pyridoxal 5'-phosphate as a cofactor.

It localises to the cytoplasm. The catalysed reaction is (sulfur carrier)-H + L-cysteine = (sulfur carrier)-SH + L-alanine. It participates in cofactor biosynthesis; iron-sulfur cluster biosynthesis. Its function is as follows. Master enzyme that delivers sulfur to a number of partners involved in Fe-S cluster assembly, tRNA modification or cofactor biosynthesis. Catalyzes the removal of elemental sulfur atoms from cysteine to produce alanine. Functions as a sulfur delivery protein for Fe-S cluster synthesis onto IscU, an Fe-S scaffold assembly protein, as well as other S acceptor proteins. The sequence is that of Cysteine desulfurase IscS from Shewanella piezotolerans (strain WP3 / JCM 13877).